A 246-amino-acid chain; its full sequence is Uridylate kinase (246 aa).

Residue 11 to 14 (KISG) participates in ATP binding. Glycine 53 contacts UMP. 2 residues coordinate ATP: glycine 54 and arginine 58. Residues aspartate 74 and 135-142 (TGSPYLTT) each bind UMP. Residues threonine 162, tyrosine 169, and aspartate 172 each coordinate ATP.

It belongs to the UMP kinase family. Homohexamer.

The protein localises to the cytoplasm. The catalysed reaction is UMP + ATP = UDP + ADP. It functions in the pathway pyrimidine metabolism; CTP biosynthesis via de novo pathway; UDP from UMP (UMPK route): step 1/1. With respect to regulation, inhibited by UTP. Its function is as follows. Catalyzes the reversible phosphorylation of UMP to UDP. This chain is Uridylate kinase, found in Chlamydia abortus (strain DSM 27085 / S26/3) (Chlamydophila abortus).